The chain runs to 595 residues: DNA primase (595 aa).

The CHC2-type zinc finger occupies 38–62 (CPFHQEKTPSFTVSNSKRFFYCFGC). Positions 250 to 332 (NHSILVEGYF…EKKISFIRLP (83 aa)) constitute a Toprim domain. Positions 256, 300, and 302 each coordinate Mg(2+).

The protein belongs to the DnaG primase family. As to quaternary structure, monomer. Interacts with DnaB. Zn(2+) is required as a cofactor. Mg(2+) serves as cofactor.

It catalyses the reaction ssDNA + n NTP = ssDNA/pppN(pN)n-1 hybrid + (n-1) diphosphate.. Its function is as follows. RNA polymerase that catalyzes the synthesis of short RNA molecules used as primers for DNA polymerase during DNA replication. The protein is DNA primase of Rickettsia conorii (strain ATCC VR-613 / Malish 7).